The sequence spans 88 residues: Small ribosomal subunit protein bS16 (88 aa).

This sequence belongs to the bacterial ribosomal protein bS16 family.

In Symbiobacterium thermophilum (strain DSM 24528 / JCM 14929 / IAM 14863 / T), this protein is Small ribosomal subunit protein bS16.